The sequence spans 149 residues: Large ribosomal subunit protein uL15 (149 aa).

Residues methionine 1–glycine 53 form a disordered region. A compositionally biased stretch (gly residues) spans threonine 23–histidine 35. Residues lysine 36–lysine 47 show a composition bias toward basic residues.

Belongs to the universal ribosomal protein uL15 family. In terms of assembly, part of the 50S ribosomal subunit.

Binds to the 23S rRNA. In Coprothermobacter proteolyticus (strain ATCC 35245 / DSM 5265 / OCM 4 / BT), this protein is Large ribosomal subunit protein uL15.